Consider the following 180-residue polypeptide: Shikimate kinase (180 aa).

Residue 14-19 (GAGKSS) participates in ATP binding. S18 lines the Mg(2+) pocket. 3 residues coordinate substrate: D36, R60, and G82. R120 contributes to the ATP binding site. R139 is a binding site for substrate.

It belongs to the shikimate kinase family. In terms of assembly, monomer. The cofactor is Mg(2+).

Its subcellular location is the cytoplasm. The catalysed reaction is shikimate + ATP = 3-phosphoshikimate + ADP + H(+). Its pathway is metabolic intermediate biosynthesis; chorismate biosynthesis; chorismate from D-erythrose 4-phosphate and phosphoenolpyruvate: step 5/7. Its function is as follows. Catalyzes the specific phosphorylation of the 3-hydroxyl group of shikimic acid using ATP as a cosubstrate. The protein is Shikimate kinase of Xylella fastidiosa (strain 9a5c).